Here is a 114-residue protein sequence, read N- to C-terminus: Beta-microseminoprotein J1 (114 aa).

The first 20 residues, 1-20 (MNVLLGGLVIFATFVTLCNA), serve as a signal peptide directing secretion. Cystine bridges form between Cys-22-Cys-70, Cys-38-Cys-62, Cys-57-Cys-93, Cys-60-Cys-69, and Cys-84-Cys-107.

It belongs to the beta-microseminoprotein family.

The protein resides in the secreted. This Saguinus oedipus (Cotton-top tamarin) protein is Beta-microseminoprotein J1 (MSPJ).